We begin with the raw amino-acid sequence, 67 residues long: MPKLKTKSGVKKRFKFTANGKVKHGVAGKRHRLISHNAKYIRQHRRTDVVSSTENRTIKAWAPYGLN.

Belongs to the bacterial ribosomal protein bL35 family.

The polypeptide is Large ribosomal subunit protein bL35 (Zymomonas mobilis subsp. mobilis (strain ATCC 31821 / ZM4 / CP4)).